The primary structure comprises 162 residues: Tegument protein BLRF2 (162 aa).

Residues 12-43 adopt a coiled-coil conformation; sequence VKAVDMSMEDMAARLARLESENKALKQQVLRG. The interval 118-162 is disordered; sequence SMLGAKGQPSPGEGTRPRESNDPNATRRARSRSRGREAKKVQISD. Positions 151–162 are enriched in basic and acidic residues; it reads RGREAKKVQISD.

The protein belongs to the herpesviridae BLRF2 family. As to quaternary structure, homooligomer; homooligomerizes and binds double-stranded DNA (dsDNA) cooperatively. Interacts with host CGAS.

Its subcellular location is the virion tegument. It localises to the host cytoplasm. Its function is as follows. Plays a role in the inhibition of host innate immune system by targeting the CGAS enzymatic activity which is the principal cytosolic DNA sensor that detects invading viral DNA. Acts by inhibiting CGAS-DNA phase separation: directly binds double-stranded DNA (dsDNA) in a length dependent but sequence independent manner and is able to form DNA-induced phase separation in infected cells. DNA phase separation of ORF52 mediates disruption of liquid-like droplets in which CGAS is activated, thereby preventing CGAS activity. The protein is Tegument protein BLRF2 of Homo sapiens (Human).